A 261-amino-acid chain; its full sequence is MGSTESPLLGQTTPNSVISTTLNDLSNWARLSSLWPLLYGTSCCFIEFASLIGSRFDFDRYGLVPRSSPRQADLIITAGTVTMKMAPSLVRLYEQMPGPKYVIAMGACTITGGMFSTDSYSTVRGVDKLIPVDVYLPGCPPKPEAIIDAIIKLRKKVAREIYEDRTKLQQGKRYFTQNHKFRVGSSLYTGNYDQKLLHKSPEPQSESTSEILSKTFESTSEIPSDFVKYENSVSFQESRNEEYFVKSNEQEINFQKFHWKC.

[4Fe-4S] cluster is bound by residues Cys-43, Cys-44, Cys-108, and Cys-139.

It belongs to the complex I 20 kDa subunit family. As to quaternary structure, NDH is composed of at least 16 different subunits, 5 of which are encoded in the nucleus. It depends on [4Fe-4S] cluster as a cofactor.

The protein resides in the plastid. Its subcellular location is the chloroplast thylakoid membrane. The catalysed reaction is a plastoquinone + NADH + (n+1) H(+)(in) = a plastoquinol + NAD(+) + n H(+)(out). It catalyses the reaction a plastoquinone + NADPH + (n+1) H(+)(in) = a plastoquinol + NADP(+) + n H(+)(out). NDH shuttles electrons from NAD(P)H:plastoquinone, via FMN and iron-sulfur (Fe-S) centers, to quinones in the photosynthetic chain and possibly in a chloroplast respiratory chain. The immediate electron acceptor for the enzyme in this species is believed to be plastoquinone. Couples the redox reaction to proton translocation, and thus conserves the redox energy in a proton gradient. The polypeptide is NAD(P)H-quinone oxidoreductase subunit K, chloroplastic (Cycas taitungensis (Prince sago)).